The primary structure comprises 557 residues: Urocanate hydratase (557 aa).

NAD(+) contacts are provided by residues 48-49 (GG), Q126, 178-180 (GMG), D198, R203, 244-245 (NA), 265-269 (QTSAH), 274-275 (YL), and Y323. C411 is an active-site residue. NAD(+) is bound at residue G493.

Belongs to the urocanase family. Requires NAD(+) as cofactor.

It is found in the cytoplasm. It carries out the reaction 4-imidazolone-5-propanoate = trans-urocanate + H2O. The protein operates within amino-acid degradation; L-histidine degradation into L-glutamate; N-formimidoyl-L-glutamate from L-histidine: step 2/3. Its function is as follows. Catalyzes the conversion of urocanate to 4-imidazolone-5-propionate. This Beutenbergia cavernae (strain ATCC BAA-8 / DSM 12333 / CCUG 43141 / JCM 11478 / NBRC 16432 / NCIMB 13614 / HKI 0122) protein is Urocanate hydratase.